Consider the following 260-residue polypeptide: Methylthioribulose-1-phosphate dehydratase (260 aa).

The interval 1 to 26 (MTPPTTGLPAENTTDDNDHLVQSDDP) is disordered. Residues 16–26 (DNDHLVQSDDP) are compositionally biased toward basic and acidic residues. Cys-109 serves as a coordination point for substrate. Positions 127 and 129 each coordinate Zn(2+). Glu-154 acts as the Proton donor/acceptor in catalysis. A Zn(2+)-binding site is contributed by His-211.

This sequence belongs to the aldolase class II family. MtnB subfamily. The cofactor is Zn(2+).

It is found in the cytoplasm. The enzyme catalyses 5-(methylsulfanyl)-D-ribulose 1-phosphate = 5-methylsulfanyl-2,3-dioxopentyl phosphate + H2O. Its pathway is amino-acid biosynthesis; L-methionine biosynthesis via salvage pathway; L-methionine from S-methyl-5-thio-alpha-D-ribose 1-phosphate: step 2/6. Functionally, catalyzes the dehydration of methylthioribulose-1-phosphate (MTRu-1-P) into 2,3-diketo-5-methylthiopentyl-1-phosphate (DK-MTP-1-P). The protein is Methylthioribulose-1-phosphate dehydratase of Podospora anserina (strain S / ATCC MYA-4624 / DSM 980 / FGSC 10383) (Pleurage anserina).